We begin with the raw amino-acid sequence, 394 residues long: Aspergillopepsin-1 (394 aa).

Positions 1–20 are cleaved as a signal peptide; sequence MVVFSKVTAAVFGLATIASA. A propeptide spans 21-69 (activation peptide); that stretch reads APAPPTRKGFTVQQQARPAQKKQVNLPAMYAHALTKFGGSVPESVKVAA. The Peptidase A1 domain occupies 85-391; it reads YLTPVNVGGT…DSEGPRLGFA (307 aa). Residues D101 and D283 contribute to the active site. A disulfide bridge connects residues C319 and C354.

The protein belongs to the peptidase A1 family. Monomer.

It is found in the secreted. The catalysed reaction is Hydrolysis of proteins with broad specificity. Generally favors hydrophobic residues in P1 and P1', but also accepts Lys in P1, which leads to activation of trypsinogen. Does not clot milk.. Functionally, secreted aspartic endopeptidase that allows assimilation of proteinaceous substrates. The scissile peptide bond is attacked by a nucleophilic water molecule activated by two aspartic residues in the active site. Shows a broad primary substrate specificity. Favors hydrophobic residues at the P1 and P1' positions, but also accepts a lysine residue in the P1 position, leading to the activation of trypsinogen and chymotrypsinogen A. The protein is Aspergillopepsin-1 (pepA) of Aspergillus clavatus (strain ATCC 1007 / CBS 513.65 / DSM 816 / NCTC 3887 / NRRL 1 / QM 1276 / 107).